The following is a 37-amino-acid chain: Cytochrome b6-f complex subunit 5 (37 aa).

The helical transmembrane segment at 5–25 (LLSGIVLGLVPITLAGLFVTA) threads the bilayer.

Belongs to the PetG family. As to quaternary structure, the 4 large subunits of the cytochrome b6-f complex are cytochrome b6, subunit IV (17 kDa polypeptide, PetD), cytochrome f and the Rieske protein, while the 4 small subunits are PetG, PetL, PetM and PetN. The complex functions as a dimer.

It localises to the plastid. The protein resides in the chloroplast thylakoid membrane. Its function is as follows. Component of the cytochrome b6-f complex, which mediates electron transfer between photosystem II (PSII) and photosystem I (PSI), cyclic electron flow around PSI, and state transitions. PetG is required for either the stability or assembly of the cytochrome b6-f complex. The chain is Cytochrome b6-f complex subunit 5 from Gnetum parvifolium (Small-leaved jointfir).